The primary structure comprises 440 residues: Probable exopolygalacturonase B (440 aa).

The signal sequence occupies residues 1–20 (MRLHFLPLVALCATTASSLA). 3 N-linked (GlcNAc...) asparagine glycosylation sites follow: N65, N190, and N230. D260 (proton donor) is an active-site residue. Residues C262 and C279 are joined by a disulfide bond. 2 N-linked (GlcNAc...) asparagine glycosylation sites follow: N268 and N280. The active site involves H283. N-linked (GlcNAc...) asparagine glycosylation is found at N307, N334, and N371. C397 and C403 form a disulfide bridge. N412 is a glycosylation site (N-linked (GlcNAc...) asparagine).

This sequence belongs to the glycosyl hydrolase 28 family.

It localises to the secreted. The catalysed reaction is [(1-&gt;4)-alpha-D-galacturonosyl](n) + H2O = alpha-D-galacturonate + [(1-&gt;4)-alpha-D-galacturonosyl](n-1). In terms of biological role, specific in hydrolyzing the terminal glycosidic bond of polygalacturonic acid and oligogalacturonates. The chain is Probable exopolygalacturonase B (pgxB) from Emericella nidulans (strain FGSC A4 / ATCC 38163 / CBS 112.46 / NRRL 194 / M139) (Aspergillus nidulans).